Reading from the N-terminus, the 265-residue chain is MNRILSVTFYLFFIYLYIYETYGKVKNTDKELSDIYGTKYYLRSGFFNSKKCKGHKYEDLQAEGEGENDKEEDSNNEEMNIDEENGLIEGQGESEDPAKASQGGLEDPAKASQGGLEDPAKASQGGLEDPAKASQGGLEDPAKASQGGLEDPAKASQGGLEDPAKASQGGLEDPAKASQGGLEDPAKASQGGLEDPAKASQGGLEDPAKASQGGLEDPAKASQGGLEDPAKASQGGAEGHGKHAPNKENKNKNKESIKNIMNMFI.

An N-terminal signal peptide occupies residues M1–G23. Residues D59 to I265 form a disordered region. The segment covering L60 to G86 has biased composition (acidic residues). 12 tandem repeats follow at residues P97–D107, P108–D118, P119–D129, P130–D140, P141–D151, P152–D162, P163–D173, P174–D184, P185–D195, P196–D206, P207–D217, and P218–D228. The 13 X 11 AA approximate tandem repeats of P-A-K-A-S-Q-G-G-L-E-D stretch occupies residues P97–G239. One copy of the 13; approximate repeat lies at P229–G239. Residues G239–I257 show a composition bias toward basic and acidic residues.

The protein resides in the parasitophorous vacuole. In terms of biological role, s antigens are soluble heat-stable proteins present in the sera of some infected individuals. The chain is S-antigen protein from Plasmodium falciparum (isolate FC27 / Papua New Guinea).